Here is a 358-residue protein sequence, read N- to C-terminus: Isopentenyl-diphosphate delta-isomerase (358 aa).

Residue 12–13 (RK) coordinates substrate. Residues 69–71 (AMT), serine 99, and asparagine 128 contribute to the FMN site. Glutamine 158 contributes to the substrate binding site. A Mg(2+)-binding site is contributed by glutamate 159. FMN is bound by residues lysine 190, threonine 220, 267-269 (GIR), and 288-289 (AG).

It belongs to the IPP isomerase type 2 family. As to quaternary structure, homooctamer. Dimer of tetramers. It depends on FMN as a cofactor. The cofactor is NADPH. Mg(2+) serves as cofactor.

The protein resides in the cytoplasm. It catalyses the reaction isopentenyl diphosphate = dimethylallyl diphosphate. Functionally, involved in the biosynthesis of isoprenoids. Catalyzes the 1,3-allylic rearrangement of the homoallylic substrate isopentenyl (IPP) to its allylic isomer, dimethylallyl diphosphate (DMAPP). This chain is Isopentenyl-diphosphate delta-isomerase, found in Listeria innocua serovar 6a (strain ATCC BAA-680 / CLIP 11262).